A 249-amino-acid chain; its full sequence is Bacillaene synthase decarboxylase PksI (249 aa).

Residue His230 is part of the active site.

Belongs to the enoyl-CoA hydratase/isomerase family. In terms of assembly, homotrimer. Does not form a heterotrimeric complex with PksH.

Its subcellular location is the cytoplasm. Its pathway is antibiotic biosynthesis; bacillaene biosynthesis. Involved in some intermediate steps for the synthesis of the antibiotic polyketide bacillaene which is involved in secondary metabolism. Catalyzes the decarboxylation of the 3-methylglutaconyl group tethered to PksL to a 3-methylcrotonyl moiety. The polypeptide is Bacillaene synthase decarboxylase PksI (pksI) (Bacillus subtilis (strain 168)).